A 98-amino-acid chain; its full sequence is NADH-ubiquinone oxidoreductase chain 4L (98 aa).

3 consecutive transmembrane segments (helical) span residues 1–21 (MTSTFIITITIFYLGLLGILI), 29–49 (ILLCLELLLISLFLSLTVWAI), and 61–81 (LILLTLSACEASAGLSLMVAL).

Belongs to the complex I subunit 4L family.

It is found in the mitochondrion membrane. The catalysed reaction is a ubiquinone + NADH + 5 H(+)(in) = a ubiquinol + NAD(+) + 4 H(+)(out). Core subunit of the mitochondrial membrane respiratory chain NADH dehydrogenase (Complex I) that is believed to belong to the minimal assembly required for catalysis. Complex I functions in the transfer of electrons from NADH to the respiratory chain. The immediate electron acceptor for the enzyme is believed to be ubiquinone. The sequence is that of NADH-ubiquinone oxidoreductase chain 4L (ND4L) from Patiria pectinifera (Starfish).